A 405-amino-acid polypeptide reads, in one-letter code: Glucose-1-phosphate adenylyltransferase 1 (405 aa).

Alpha-D-glucose 1-phosphate-binding positions include tyrosine 96, glycine 161, glutamate 176–lysine 177, and serine 194.

It belongs to the bacterial/plant glucose-1-phosphate adenylyltransferase family. Homotetramer.

The catalysed reaction is alpha-D-glucose 1-phosphate + ATP + H(+) = ADP-alpha-D-glucose + diphosphate. The protein operates within glycan biosynthesis; glycogen biosynthesis. Its function is as follows. Involved in the biosynthesis of ADP-glucose, a building block required for the elongation reactions to produce glycogen. Catalyzes the reaction between ATP and alpha-D-glucose 1-phosphate (G1P) to produce pyrophosphate and ADP-Glc. This is Glucose-1-phosphate adenylyltransferase 1 from Vibrio parahaemolyticus serotype O3:K6 (strain RIMD 2210633).